We begin with the raw amino-acid sequence, 447 residues long: tRNA(Ile)-lysidine synthase (447 aa).

31–36 (SGGMDS) provides a ligand contact to ATP.

The protein belongs to the tRNA(Ile)-lysidine synthase family.

Its subcellular location is the cytoplasm. It carries out the reaction cytidine(34) in tRNA(Ile2) + L-lysine + ATP = lysidine(34) in tRNA(Ile2) + AMP + diphosphate + H(+). Functionally, ligates lysine onto the cytidine present at position 34 of the AUA codon-specific tRNA(Ile) that contains the anticodon CAU, in an ATP-dependent manner. Cytidine is converted to lysidine, thus changing the amino acid specificity of the tRNA from methionine to isoleucine. The protein is tRNA(Ile)-lysidine synthase of Pseudothermotoga lettingae (strain ATCC BAA-301 / DSM 14385 / NBRC 107922 / TMO) (Thermotoga lettingae).